A 1113-amino-acid chain; its full sequence is Receptor-type guanylate cyclase gcy-18 (1113 aa).

Residues 1–18 form the signal peptide; sequence MLKTLLFILIFFNIPIIA. Residues 19–499 lie on the Extracellular side of the membrane; the sequence is IEEIPDIKEN…RGQRCSYLLE (481 aa). 3 N-linked (GlcNAc...) asparagine glycosylation sites follow: asparagine 72, asparagine 369, and asparagine 456. The helical transmembrane segment at 500–520 threads the bilayer; sequence ISVGSLIILLILISVVFFFLF. The Cytoplasmic portion of the chain corresponds to 521-1113; it reads RYCENKQLEK…TNYIQNVEGV (593 aa). Residues 543-848 form the Protein kinase domain; sequence IDEEQVKSMM…RVRLNTEMVL (306 aa). Positions 853–884 form a coiled coil; sequence SLVDQMMKMMEQYANNLEKLVAERTGMLEEAN. The Guanylate cyclase domain maps to 918-1048; the sequence is TILFSDIVGF…DTVNVSSRME (131 aa). Mg(2+) contacts are provided by aspartate 923, isoleucine 924, and aspartate 967.

It belongs to the adenylyl cyclase class-4/guanylyl cyclase family. As to expression, expressed specifically in AFD sensory neurons.

Its subcellular location is the cell membrane. The protein localises to the cell projection. It is found in the cilium. The catalysed reaction is GTP = 3',5'-cyclic GMP + diphosphate. Guanylate cyclase involved in the production of the second messenger cGMP. Regulates thermotaxis responses in AFD sensory neurons. May regulate AFD neuronal activity such as calcium responses to temperature gradients. The polypeptide is Receptor-type guanylate cyclase gcy-18 (Caenorhabditis elegans).